Reading from the N-terminus, the 310-residue chain is Nitric oxide synthase-interacting protein homolog (310 aa).

Residues 115–124 (FSAIESTPSR) show a composition bias toward polar residues. Residues 115–141 (FSAIESTPSRTGAVATPRPEVGSLKRQ) form a disordered region.

Belongs to the NOSIP family.

Its subcellular location is the cytoplasm. The protein localises to the nucleus. Negatively regulates nitric oxide production by inducing nitric oxide synthase translocation to actin cytoskeleton and inhibiting its enzymatic activity. The polypeptide is Nitric oxide synthase-interacting protein homolog (Caenorhabditis elegans).